Here is a 355-residue protein sequence, read N- to C-terminus: tRNA uridine(34) hydroxylase (355 aa).

The Rhodanese domain occupies 146 to 240 (DDPDTLFVDM…YARKAKEQGL (95 aa)). Cys200 serves as the catalytic Cysteine persulfide intermediate. The segment at 333 to 355 (NKSKGLLQATMHIPSPEKSADEK) is disordered.

Belongs to the TrhO family.

The enzyme catalyses uridine(34) in tRNA + AH2 + O2 = 5-hydroxyuridine(34) in tRNA + A + H2O. Functionally, catalyzes oxygen-dependent 5-hydroxyuridine (ho5U) modification at position 34 in tRNAs. The chain is tRNA uridine(34) hydroxylase from Yersinia pseudotuberculosis serotype O:1b (strain IP 31758).